The sequence spans 471 residues: Putative multidrug resistance protein MdtD (471 aa).

Over 1–11 (MTDLPDNTRWQ) the chain is Periplasmic. Residues 12–32 (LWIVAFGFFMQSLDTTIVNTA) form a helical membrane-spanning segment. The Cytoplasmic segment spans residues 33–48 (LPSMAQSLGESPLHMH). Residues 49–69 (MVIVSYVLTVAVMLPASGWLA) traverse the membrane as a helical segment. Residues 70-76 (DKVGVRN) lie on the Periplasmic side of the membrane. A helical membrane pass occupies residues 77 to 97 (IFFTAIVLFTLGSLFCALSGT). The Cytoplasmic segment spans residues 98–101 (LNEL). Residues 102-124 (LLARALQGVGGAMMVPVGRLTVM) traverse the membrane as a helical segment. The Periplasmic portion of the chain corresponds to 125 to 137 (KIVPREQYMAAMT). The chain crosses the membrane as a helical span at residues 138 to 158 (FVTLPGQVGPLLGPALGGLLV). Residues 159–164 (EYASWH) lie on the Cytoplasmic side of the membrane. The helical transmembrane segment at 165 to 185 (WIFLINIPVGIIGAIATLMLM) threads the bilayer. Topologically, residues 186–196 (PNYTMQTRRFD) are periplasmic. A helical transmembrane segment spans residues 197-217 (LSGFLLLAIGMAVLTLALDGS). Topologically, residues 218-224 (KGTGLSP) are cytoplasmic. Residues 225-245 (LAITGLVAVGVVALVLYLLHA) form a helical membrane-spanning segment. Topologically, residues 246-262 (RNNNRALFSLKLFRTRT) are periplasmic. The chain crosses the membrane as a helical span at residues 263–283 (FSLGLAGSFAGRIGSGMLPFM). At 284–285 (TP) the chain is on the cytoplasmic side. A helical membrane pass occupies residues 286–306 (VFLQIGLGFSPFHAGLMMIPM). Topologically, residues 307 to 341 (VLGSMGMKRIVVQVVNRFGYRRVLVATTLGLSLVT) are periplasmic. A helical transmembrane segment spans residues 342 to 362 (LLFMTTALLGWYYVLPFVLFL). The Cytoplasmic portion of the chain corresponds to 363–395 (QGMVNSTRFSSMNTLTLKDLPDNLASSGNSLLS). Residues 396-416 (MIMQLSMSIGVTIAGLLLGLF) form a helical membrane-spanning segment. Residues 417 to 430 (GSQHVSVDSGTTQT) are Periplasmic-facing. Residues 431-451 (VFMYTWLSMAFIIALPAFIFA) traverse the membrane as a helical segment. At 452–471 (RVPNDTHQNVAISRRKRSAQ) the chain is on the cytoplasmic side.

This sequence belongs to the major facilitator superfamily. TCR/Tet family.

It localises to the cell inner membrane. The chain is Putative multidrug resistance protein MdtD from Escherichia coli O17:K52:H18 (strain UMN026 / ExPEC).